We begin with the raw amino-acid sequence, 101 residues long: Small ribosomal subunit protein uS14 (101 aa).

It belongs to the universal ribosomal protein uS14 family. As to quaternary structure, part of the 30S ribosomal subunit. Contacts proteins S3 and S10.

Binds 16S rRNA, required for the assembly of 30S particles and may also be responsible for determining the conformation of the 16S rRNA at the A site. The sequence is that of Small ribosomal subunit protein uS14 from Beijerinckia indica subsp. indica (strain ATCC 9039 / DSM 1715 / NCIMB 8712).